The sequence spans 249 residues: Exosome complex component Rrp41 (249 aa).

It belongs to the RNase PH family. Rrp41 subfamily. In terms of assembly, component of the archaeal exosome complex. Forms a hexameric ring-like arrangement composed of 3 Rrp41-Rrp42 heterodimers. The hexameric ring associates with a trimer of Rrp4 and/or Csl4 subunits.

The protein resides in the cytoplasm. Functionally, catalytic component of the exosome, which is a complex involved in RNA degradation. Has 3'-&gt;5' exoribonuclease activity. Can also synthesize heteromeric RNA-tails. The chain is Exosome complex component Rrp41 from Pyrococcus abyssi (strain GE5 / Orsay).